The sequence spans 403 residues: Na(+)/H(+) antiporter NhaA (403 aa).

11 helical membrane-spanning segments follow: residues 23–43, 66–86, 101–121, 132–152, 161–181, 184–204, 219–239, 257–277, 297–317, 333–353, and 363–383; these read AFFLLLASLAGFVLANSPWAA, VAAWVSDGLMTLFFLVVILEI, VALPLIGAVGGMVVPALTYLL, GWAIPVATDAAFTLPIILALG, AWLMALAIFDDVLGIVVIALF, GSMYWPALLAVVLVTAALIGA, GILLWTALLDSGLHPTLAGVI, WVSSAVTPLVTWIVLPLFGFM, LGIMLGLMLGKPVGVFGATLL, GMLFGLSLLCGIGFTISLFVA, and IAPAKMGIFAGSALSALTGWF.

Belongs to the NhaA Na(+)/H(+) (TC 2.A.33) antiporter family.

The protein resides in the cell inner membrane. The catalysed reaction is Na(+)(in) + 2 H(+)(out) = Na(+)(out) + 2 H(+)(in). Functionally, na(+)/H(+) antiporter that extrudes sodium in exchange for external protons. This Gluconobacter oxydans (strain 621H) (Gluconobacter suboxydans) protein is Na(+)/H(+) antiporter NhaA.